The chain runs to 150 residues: Small ribosomal subunit protein uS7cz/uS7cy (150 aa).

This sequence belongs to the universal ribosomal protein uS7 family. As to quaternary structure, part of the 30S ribosomal subunit.

The protein localises to the plastid. It is found in the chloroplast. Functionally, one of the primary rRNA binding proteins, it binds directly to 16S rRNA where it nucleates assembly of the head domain of the 30S subunit. This is Small ribosomal subunit protein uS7cz/uS7cy (rps7-A) from Adiantum capillus-veneris (Maidenhair fern).